We begin with the raw amino-acid sequence, 337 residues long: MISLKSIVDKLYNLEDLSYQESYQLFDYFIKGQIELPLQTSILTALKLKKETSIEIASAVEALLDNTKEFPKIKGDLAGIVGTGGDGFNTINISTTAAIVAATAGYKVAKHGGRSVSSKSGSFDLLESFGVNIELAPDQTKQCLELYNLGFLFAPFYSEGFRYIREARAILKTRTIFNILGPLINPARPNKVVIGVYSKDLILPMAKTLVNLGIDRAAVVYGSGLDEVAIHDGTYVAEIQNSQITEYKVSPADFGIDTYAIKDLEGGLPEQNREIIKQILLGKGKEAHNAAVAVNVAMLMKLYDKDDLKQNTQEVLEIIKSGKCFNTLQQVINYSNK.

Residues Gly82, 85 to 86, Thr90, 92 to 95, 110 to 118, and Ser122 contribute to the 5-phospho-alpha-D-ribose 1-diphosphate site; these read GD, NIST, and KHGGRSVSS. Anthranilate is bound at residue Gly82. Ser94 provides a ligand contact to Mg(2+). Arg168 is an anthranilate binding site. Mg(2+) contacts are provided by Asp226 and Glu227.

The protein belongs to the anthranilate phosphoribosyltransferase family. In terms of assembly, homodimer. Requires Mg(2+) as cofactor.

The catalysed reaction is N-(5-phospho-beta-D-ribosyl)anthranilate + diphosphate = 5-phospho-alpha-D-ribose 1-diphosphate + anthranilate. It functions in the pathway amino-acid biosynthesis; L-tryptophan biosynthesis; L-tryptophan from chorismate: step 2/5. Functionally, catalyzes the transfer of the phosphoribosyl group of 5-phosphorylribose-1-pyrophosphate (PRPP) to anthranilate to yield N-(5'-phosphoribosyl)-anthranilate (PRA). This is Anthranilate phosphoribosyltransferase from Francisella tularensis subsp. novicida (strain U112).